The chain runs to 212 residues: Amelotin (212 aa).

The first 16 residues, 1–16, serve as a signal peptide directing secretion; the sequence is MKTVVLLLCLLGSAQS. Disordered stretches follow at residues 23 to 42 and 141 to 212; these read PALG…PLTQ and PSGQ…NRTK. Composition is skewed to polar residues over residues 33 to 42 and 165 to 178; these read TPGQVTPLTQ and PANQ…TTPA.

This sequence belongs to the amelotin family. Post-translationally, O-glycosylated. In terms of processing, phosphorylated by FAM20C in vitro. In terms of tissue distribution, highest expression in the mandible. Found in the basal lamina of maturation stage ameloblasts of incisors and unerupted molars. Also found in the internal basal lamina of junctional epithelium in molars.

The protein localises to the secreted. In terms of biological role, is a promoter of calcium phosphate mineralization, playing a critical role in the formation of the compact, mineralized, aprismatic enamel surface layer during the maturation stage of amelogenesis. This Rattus norvegicus (Rat) protein is Amelotin.